We begin with the raw amino-acid sequence, 180 residues long: Adenosine 5'-phosphosulfate reductase (180 aa).

Residues cysteine 57, cysteine 58, cysteine 140, and cysteine 143 each coordinate [4Fe-4S] cluster. The active-site Nucleophile; cysteine thiosulfonate intermediate is the cysteine 168.

Belongs to the PAPS reductase family. CysH subfamily. Requires [4Fe-4S] cluster as cofactor.

The protein localises to the cytoplasm. It carries out the reaction [thioredoxin]-disulfide + sulfite + AMP + 2 H(+) = adenosine 5'-phosphosulfate + [thioredoxin]-dithiol. The protein operates within sulfur metabolism; hydrogen sulfide biosynthesis; sulfite from sulfate. Functionally, catalyzes the formation of sulfite from adenosine 5'-phosphosulfate (APS) using thioredoxin as an electron donor. This Rhizobium tropici protein is Adenosine 5'-phosphosulfate reductase.